We begin with the raw amino-acid sequence, 257 residues long: Phosphate import ATP-binding protein PstB (257 aa).

An ABC transporter domain is found at 4–252 (LKLNDVNIYY…PDNKETEDYI (249 aa)). Position 36–43 (36–43 (GPSGCGKS)) interacts with ATP.

This sequence belongs to the ABC transporter superfamily. Phosphate importer (TC 3.A.1.7) family. As to quaternary structure, the complex is composed of two ATP-binding proteins (PstB), two transmembrane proteins (PstC and PstA) and a solute-binding protein (PstS).

The protein localises to the cell membrane. The enzyme catalyses phosphate(out) + ATP + H2O = ADP + 2 phosphate(in) + H(+). Functionally, part of the ABC transporter complex PstSACB involved in phosphate import. Responsible for energy coupling to the transport system. The sequence is that of Phosphate import ATP-binding protein PstB from Corynebacterium efficiens (strain DSM 44549 / YS-314 / AJ 12310 / JCM 11189 / NBRC 100395).